Reading from the N-terminus, the 248-residue chain is Ribosomal RNA small subunit methyltransferase J (248 aa).

S-adenosyl-L-methionine-binding positions include 98–99 (RD), 114–115 (ER), 150–151 (SS), and D168.

This sequence belongs to the methyltransferase superfamily. RsmJ family.

Its subcellular location is the cytoplasm. The catalysed reaction is guanosine(1516) in 16S rRNA + S-adenosyl-L-methionine = N(2)-methylguanosine(1516) in 16S rRNA + S-adenosyl-L-homocysteine + H(+). Its function is as follows. Specifically methylates the guanosine in position 1516 of 16S rRNA. This Shewanella amazonensis (strain ATCC BAA-1098 / SB2B) protein is Ribosomal RNA small subunit methyltransferase J.